The sequence spans 157 residues: Regulatory protein RecX (157 aa).

It belongs to the RecX family.

The protein localises to the cytoplasm. Its function is as follows. Modulates RecA activity. The chain is Regulatory protein RecX from Leptothrix cholodnii (strain ATCC 51168 / LMG 8142 / SP-6) (Leptothrix discophora (strain SP-6)).